A 132-amino-acid chain; its full sequence is Tail tube terminator protein (132 aa).

The protein belongs to the lambda-like tail terminator protein family. In terms of assembly, homohexamer. May bind to major tail protein and /or tape measure protein.

The protein resides in the virion. Its subcellular location is the host cytoplasm. Plays an essential role in tail assembly by capping the rapidly polymerizing tail once it has reached its requisite length and serving as the interaction surface for the completion protein. This Escherichia phage N15 (Bacteriophage N15) protein is Tail tube terminator protein.